The chain runs to 430 residues: Enolase (430 aa).

Residue glutamine 163 coordinates (2R)-2-phosphoglycerate. The active-site Proton donor is glutamate 205. 3 residues coordinate Mg(2+): aspartate 242, glutamate 287, and aspartate 314. (2R)-2-phosphoglycerate contacts are provided by lysine 339, arginine 368, serine 369, and lysine 390. Lysine 339 acts as the Proton acceptor in catalysis.

The protein belongs to the enolase family. It depends on Mg(2+) as a cofactor.

Its subcellular location is the cytoplasm. The protein localises to the secreted. It localises to the cell surface. It catalyses the reaction (2R)-2-phosphoglycerate = phosphoenolpyruvate + H2O. Its pathway is carbohydrate degradation; glycolysis; pyruvate from D-glyceraldehyde 3-phosphate: step 4/5. Functionally, catalyzes the reversible conversion of 2-phosphoglycerate (2-PG) into phosphoenolpyruvate (PEP). It is essential for the degradation of carbohydrates via glycolysis. This Alkaliphilus metalliredigens (strain QYMF) protein is Enolase.